The chain runs to 127 residues: Calcitonin receptor-stimulating peptide 2 (127 aa).

A signal peptide spans 1 to 25 (MGFWKLSPFLAIGLLVMYQAGILQA). Residues 26–81 (APFRSALENPLESATLTEDEICVLLTAVVKDYVQMKARELQQEQETEGSSLTAQKS) constitute a propeptide that is removed on maturation. A disordered region spans residues 65-85 (LQQEQETEGSSLTAQKSSCKD). Polar residues predominate over residues 72–81 (EGSSLTAQKS). A disulfide bond links Cys-83 and Cys-88.

It belongs to the calcitonin family.

It localises to the secreted. In Canis lupus familiaris (Dog), this protein is Calcitonin receptor-stimulating peptide 2 (CRSP2).